A 78-amino-acid polypeptide reads, in one-letter code: Serine rich endogenous peptide 12 (78 aa).

A signal peptide spans M1–C24. A propeptide spans R25–R43 (removed in mature form). The disordered stretch occupies residues S47–Y78. The SCOOP motif motif lies at S50–R64. Positions S56 to S58 match the SxS motif essential for MIK2 binding motif.

Belongs to the serine rich endogenous peptide (SCOOP) phytocytokine family. In terms of assembly, interacts with MIK2 (via extracellular leucine-rich repeat domain); this interaction triggers the formation of complex between MIK2 and the BAK1/SERK3 and SERK4 coreceptors, and subsequent BAK1 activation by phosphorylation on 'Ser-612'. As to expression, mostly expressed in the whole root system, and, to a lower extent, in seedlings shoots.

The protein localises to the cell membrane. It localises to the secreted. It is found in the extracellular space. Its subcellular location is the apoplast. Its function is as follows. Brassicaceae-specific phytocytokine (plant endogenous peptide released into the apoplast) perceived by MIK2 in a BAK1/SERK3 and SERK4 coreceptors-dependent manner, that modulates various physiological and antimicrobial processes including root growth prevention, phospholipid signaling pathway activation (e.g. accumulation of phosphatidic acid (PA), but transient reduction of phosphatidylinositol 4,5-bisphosphate (PIP(2)) levels) and reactive oxygen species (ROS) response regulation. Moderates primary root growth, and regulates root meristems and cell elongation; this root growth regulation is associated with the modulation of ROS metabolism and alteration of cell wall structure, and depends on variations in many genes expression. Promotes ROS (e.g. superoxide anion O(2) and hydrogen peroxide H(2)O(2)) production and MAPK (e.g. MPK3, MPK4 and MPK6) activation in a MIK2-dependent manner, thus leading to the up-regulation of immune-related marker genes (e.g. WRKY30, WRKY33 and CYP81F2). Involved in biotic and oxidative stress responses; acts as a negative regulator of defense against necrotrophic pathogens such as the bacteria Erwinia amylovora and the fungus Alternaria brassicicola. Able to prime defense responses against the pathogenic bacteria Pseudomonas syringae pv. tomato DC3000. Contributes to the triggering of defense responses toward generalist herbivores such as Spodoptera littoralis, probably via the activation of jasmonate and indole glucosinolate biosynthesis. Triggers the expression of several PROSCOOP genes (e.g. PROSCOOP3, PROSCOOP7, PROSCOOP12 and PROSCOOP13). The chain is Serine rich endogenous peptide 12 from Arabidopsis thaliana (Mouse-ear cress).